The following is a 104-amino-acid chain: Phosphoribosyl-ATP pyrophosphatase (104 aa).

This sequence belongs to the PRA-PH family.

The protein localises to the cytoplasm. The catalysed reaction is 1-(5-phospho-beta-D-ribosyl)-ATP + H2O = 1-(5-phospho-beta-D-ribosyl)-5'-AMP + diphosphate + H(+). The protein operates within amino-acid biosynthesis; L-histidine biosynthesis; L-histidine from 5-phospho-alpha-D-ribose 1-diphosphate: step 2/9. This chain is Phosphoribosyl-ATP pyrophosphatase, found in Rhizobium rhizogenes (strain K84 / ATCC BAA-868) (Agrobacterium radiobacter).